The chain runs to 215 residues: Probable phosphoglycerate mutase GpmB (215 aa).

Substrate contacts are provided by residues 8–15, 21–22, arginine 58, arginine 60, 82–85, 104–105, and 151–152; these read RHGETQWN, QG, ELNM, RR, and GI. The active-site Tele-phosphohistidine intermediate is the histidine 9. The active-site Proton donor/acceptor is the glutamate 82.

It belongs to the phosphoglycerate mutase family. GpmB subfamily.

It catalyses the reaction (2R)-2-phosphoglycerate = (2R)-3-phosphoglycerate. It participates in carbohydrate degradation; glycolysis; pyruvate from D-glyceraldehyde 3-phosphate: step 3/5. This chain is Probable phosphoglycerate mutase GpmB, found in Shigella boydii serotype 18 (strain CDC 3083-94 / BS512).